Reading from the N-terminus, the 351-residue chain is MRKIIHVDMDCFFAAVEMRDNPALRDIPIAIGGSRERRGVISTANYPARKFGVRSAMPTGMALKLCPHLTLLPGRFDAYKEASNHIREIFSRYTSRIEPLSLDEAYLDVTDSVHCHGSATLIAQEIRQTIFSELQLTASAGVAPVKFLAKIASDMNKPNGQFVITPAEVPAFLQTLPLAKIPGVGKVSAAKLEAMGLRTCGDVQKCDLVMLLKRFGKFGRILWERSQGIDERDVNSERLRKSVGVERTMAEDIHHWSECEAIIERLYPELERRLAKVKPDLLIARQGVKLKFDDFQQTTQEHVWPRLNKADLIATARKTWDERRGGRGVRLVGLHVTLLDPQMERQLVLGL.

The region spanning 4 to 185 is the UmuC domain; that stretch reads IIHVDMDCFF…LPLAKIPGVG (182 aa). Residues D8 and D103 each contribute to the Mg(2+) site. E104 is a catalytic residue.

It belongs to the DNA polymerase type-Y family. As to quaternary structure, monomer. The cofactor is Mg(2+).

It is found in the cytoplasm. It catalyses the reaction DNA(n) + a 2'-deoxyribonucleoside 5'-triphosphate = DNA(n+1) + diphosphate. Functionally, poorly processive, error-prone DNA polymerase involved in untargeted mutagenesis. Copies undamaged DNA at stalled replication forks, which arise in vivo from mismatched or misaligned primer ends. These misaligned primers can be extended by PolIV. Exhibits no 3'-5' exonuclease (proofreading) activity. May be involved in translesional synthesis, in conjunction with the beta clamp from PolIII. This chain is DNA polymerase IV, found in Escherichia coli O139:H28 (strain E24377A / ETEC).